The sequence spans 195 residues: MNYIPYVIEKTGRGERSYDIYSRLLKDRIIMLSGEINDGVASSIVSQMLFLEAEDPEKDIYLYINSPGGVITSGMSIYDTMNYVKPDICTICIGQAASMGAFLLSCGTKGKRFSLPNSRIMIHQPLGGAQGQATDIEIQAKEILRLKSILNGILASNTGQPLEKIAKDTDRDFFMSAQESKEYGLIDNVLEKSFK.

The Nucleophile role is filled by serine 98. The active site involves histidine 123.

Belongs to the peptidase S14 family. Fourteen ClpP subunits assemble into 2 heptameric rings which stack back to back to give a disk-like structure with a central cavity, resembling the structure of eukaryotic proteasomes.

The protein localises to the cytoplasm. It catalyses the reaction Hydrolysis of proteins to small peptides in the presence of ATP and magnesium. alpha-casein is the usual test substrate. In the absence of ATP, only oligopeptides shorter than five residues are hydrolyzed (such as succinyl-Leu-Tyr-|-NHMec, and Leu-Tyr-Leu-|-Tyr-Trp, in which cleavage of the -Tyr-|-Leu- and -Tyr-|-Trp bonds also occurs).. Cleaves peptides in various proteins in a process that requires ATP hydrolysis. Has a chymotrypsin-like activity. Plays a major role in the degradation of misfolded proteins. The sequence is that of ATP-dependent Clp protease proteolytic subunit from Wolinella succinogenes (strain ATCC 29543 / DSM 1740 / CCUG 13145 / JCM 31913 / LMG 7466 / NCTC 11488 / FDC 602W) (Vibrio succinogenes).